Here is a 321-residue protein sequence, read N- to C-terminus: MGHVLSFTHCKDAPSTASSTPDSCPPEGEEDDSPVTEVNFWPLPSPHEPTFSYITIGSTAPLSRPPVRARRGLGQSRVHAAPREETEEKEVKDVVTYVLLEKTCQLKKLSPPHVQEEVVFVAKPQPQLEVFRAVKDLLYWRDILLSAGCLTGVTLSLLCLSQFSVISVFAYGCLIILSVTLTLRLYTKLLHALKRGNGANPFQYYLDADLKLTTKQAEEITARVLSLLSTTICTLRSLFLVEELKDSLKFLVIIYLLTYVGAVFNGITVLLLCVIGAFTFPILYKQHQTQVDHYVSLVSKKGNAFRSKIQGTVKKPPAKQK.

2 disordered regions span residues 1–36 and 65–85; these read MGHV…SPVT and PPVR…PREE. The Reticulon domain occupies 134–321; the sequence is VKDLLYWRDI…TVKKPPAKQK (188 aa). 2 consecutive transmembrane segments (helical) span residues 163–183 and 250–270; these read FSVI…TLTL and FLVI…ITVL.

It localises to the endoplasmic reticulum membrane. The protein resides in the sarcoplasmic reticulum membrane. It is found in the cell membrane. Its subcellular location is the sarcolemma. The protein localises to the T-tubule. It localises to the cytoplasm. The protein resides in the myofibril. It is found in the sarcomere. Its subcellular location is the z line. The protein localises to the cytoskeleton. Its function is as follows. Inhibits amyloid precursor protein processing, probably by blocking BACE1 activity. Enhances trafficking of the glutamate transporter SLC1A1/EAAC1 from the endoplasmic reticulum to the cell surface. Plays a role in the translocation of SLC2A4/GLUT4 from intracellular membranes to the cell membrane which facilitates the uptake of glucose into the cell. The chain is Reticulon-2 from Xenopus tropicalis (Western clawed frog).